Here is a 162-residue protein sequence, read N- to C-terminus: Allantoicase (162 aa).

It belongs to the allantoicase family. Homohexamer. As to expression, expressed in zygote.

The enzyme catalyses allantoate + H2O = (S)-ureidoglycolate + urea. It functions in the pathway nitrogen metabolism; (S)-allantoin degradation; (S)-ureidoglycolate from allantoate (aminidohydrolase route): step 1/1. In terms of biological role, catalyzes the degradation of allantoate to (-)-ureidoglycolate and (+)-ureidoglycolate to glyoxylate. This chain is Allantoicase, found in Chlamydomonas reinhardtii (Chlamydomonas smithii).